Here is a 33-residue protein sequence, read N- to C-terminus: Brevinin-2JD (33 aa).

Cysteine 27 and cysteine 33 are joined by a disulfide.

Expressed by the skin glands.

It localises to the secreted. Functionally, has antibacterial activity against E.coli ATCC 25992 (MIC=38 uM), E.coli CIB 84492 (MIC=38 uM), S.aureus ATCC 25923 (MIC=19 uM) and S.aureus CIB 85462 (MIC=19 uM). Has antifungal activity against C.albicans (MIC=19 uM). Has weak hemolytic activity against rabbit erythrocytes. This chain is Brevinin-2JD, found in Odorrana jingdongensis (Jingdong frog).